Reading from the N-terminus, the 148-residue chain is Natriuretic peptide BF131 (148 aa).

A signal peptide spans 1–27 (MVGPSRLAGGGLLLLLLLALLPLALDG). The propeptide occupies 28–83 (KPAPPPQALPKDPAAASAAERIMRALLPDSKSSRPATDRMVHPEHQAGGGDTRRLQ). 2 disordered regions span residues 54–83 (LPDSKSSRPATDRMVHPEHQAGGGDTRRLQ) and 105–127 (TSDMGCRHRKDPPRAPPAAPSAA). The span at 63–83 (ATDRMVHPEHQAGGGDTRRLQ) shows a compositional bias: basic and acidic residues. A disulfide bond links cysteine 94 and cysteine 110. Positions 130–148 (AVTWLIRDLRADSKQSRAA) are excised as a propeptide.

Belongs to the natriuretic peptide family. Expressed by the venom gland.

Its subcellular location is the secreted. Natriuretic peptide that dose-dependently induces the rapid relaxation of rat aortic strips phenylephrine-precontracted. Acts by stimulating cGMP production in a dose-dependent manner (by probably activating NPR1 and/or NPR2). May also show potent hypotensive effects. This is Natriuretic peptide BF131 from Bungarus flaviceps flaviceps (Red-headed krait).